The chain runs to 246 residues: UDP-2,3-diacylglucosamine hydrolase (246 aa).

Mn(2+) contacts are provided by aspartate 8, histidine 10, aspartate 41, asparagine 79, and histidine 114. Substrate is bound at residue 79–80 (NR). Aspartate 122, lysine 164, lysine 167, and histidine 195 together coordinate substrate. Histidine 195 and histidine 197 together coordinate Mn(2+).

The protein belongs to the LpxH family. It depends on Mn(2+) as a cofactor.

It localises to the cell inner membrane. The enzyme catalyses UDP-2-N,3-O-bis[(3R)-3-hydroxytetradecanoyl]-alpha-D-glucosamine + H2O = 2-N,3-O-bis[(3R)-3-hydroxytetradecanoyl]-alpha-D-glucosaminyl 1-phosphate + UMP + 2 H(+). Its pathway is glycolipid biosynthesis; lipid IV(A) biosynthesis; lipid IV(A) from (3R)-3-hydroxytetradecanoyl-[acyl-carrier-protein] and UDP-N-acetyl-alpha-D-glucosamine: step 4/6. Functionally, hydrolyzes the pyrophosphate bond of UDP-2,3-diacylglucosamine to yield 2,3-diacylglucosamine 1-phosphate (lipid X) and UMP by catalyzing the attack of water at the alpha-P atom. Involved in the biosynthesis of lipid A, a phosphorylated glycolipid that anchors the lipopolysaccharide to the outer membrane of the cell. This Vibrio cholerae serotype O1 (strain ATCC 39541 / Classical Ogawa 395 / O395) protein is UDP-2,3-diacylglucosamine hydrolase.